A 146-amino-acid polypeptide reads, in one-letter code: Large ribosomal subunit protein uL15 (146 aa).

The interval 1-46 (MLHQIKPFKGARKTVKRLGRGCGSGTGKTSGKGHKGQLARSGGGVR) is disordered. The span at 9–19 (KGARKTVKRLG) shows a compositional bias: basic residues. The span at 20-30 (RGCGSGTGKTS) shows a compositional bias: gly residues.

The protein belongs to the universal ribosomal protein uL15 family. In terms of assembly, part of the 50S ribosomal subunit.

Functionally, binds to the 23S rRNA. This is Large ribosomal subunit protein uL15 from Phytoplasma mali (strain AT).